A 616-amino-acid polypeptide reads, in one-letter code: Dihydroxy-acid dehydratase (616 aa).

Aspartate 81 contributes to the Mg(2+) binding site. Position 122 (cysteine 122) interacts with [2Fe-2S] cluster. Residues aspartate 123 and lysine 124 each contribute to the Mg(2+) site. Lysine 124 carries the post-translational modification N6-carboxylysine. Cysteine 195 contacts [2Fe-2S] cluster. Residue glutamate 491 participates in Mg(2+) binding. Residue serine 517 is the Proton acceptor of the active site.

The protein belongs to the IlvD/Edd family. In terms of assembly, homodimer. The cofactor is [2Fe-2S] cluster. Mg(2+) is required as a cofactor.

The catalysed reaction is (2R)-2,3-dihydroxy-3-methylbutanoate = 3-methyl-2-oxobutanoate + H2O. It catalyses the reaction (2R,3R)-2,3-dihydroxy-3-methylpentanoate = (S)-3-methyl-2-oxopentanoate + H2O. Its pathway is amino-acid biosynthesis; L-isoleucine biosynthesis; L-isoleucine from 2-oxobutanoate: step 3/4. The protein operates within amino-acid biosynthesis; L-valine biosynthesis; L-valine from pyruvate: step 3/4. Its function is as follows. Functions in the biosynthesis of branched-chain amino acids. Catalyzes the dehydration of (2R,3R)-2,3-dihydroxy-3-methylpentanoate (2,3-dihydroxy-3-methylvalerate) into 2-oxo-3-methylpentanoate (2-oxo-3-methylvalerate) and of (2R)-2,3-dihydroxy-3-methylbutanoate (2,3-dihydroxyisovalerate) into 2-oxo-3-methylbutanoate (2-oxoisovalerate), the penultimate precursor to L-isoleucine and L-valine, respectively. The protein is Dihydroxy-acid dehydratase of Shigella flexneri.